The chain runs to 379 residues: Putative acetyl-CoA C-acetyltransferase VraB (379 aa).

The Acyl-thioester intermediate role is filled by Cys86. His338 functions as the Proton acceptor in the catalytic mechanism.

The protein belongs to the thiolase-like superfamily. Thiolase family.

This Staphylococcus aureus (strain MSSA476) protein is Putative acetyl-CoA C-acetyltransferase VraB (vraB).